The chain runs to 500 residues: MLNVNFVNEESSTNQGLVVFIDEQLKLDSNLIGLDQQHHGLISKTIQNKLQFTGKYGQIKVIPSVIKSGEVRYLIIAGLGNEEKLTEAKIEELGGKILQHATGCKISTIGLKLTNRISRFTSQTFASLVASGAFLASYRFDKYRTTLKEAEKFAVESIEIFTDNSTETAKLFEIKKLIAEAVFFTRDISNEPSNIKTPQVYAERIVDRLEPLGVDVDVIGEREMKNLGMGALLGVGQGSQNESKLVVMEYKGGSKDAPTIALVGKGVIFDTGGISLKPSSDMHLMRYDMGGSAAVVGTIIAVAGQKLPINIVGVVGLVENMPSGNAQRPGDVVTTMSGQTAEVLNTDAEGRLVLADAVWYAQEKFKPKCVIDVATLTGAITIALGNTYAGCFSNNDELADKLIKVGEEVNEKLWRMPLHDEYDAMINSDIADMANIGNVPRAAGSCIAAHFIKRFIKDGVDWAHLDIAGVANSNKASALGPKGAVGYGVRLLEKFIKEYT.

Mn(2+) contacts are provided by Lys-265 and Asp-270. Lys-277 is an active-site residue. Residues Asp-288, Asp-347, and Glu-349 each coordinate Mn(2+). Residue Arg-351 is part of the active site.

Belongs to the peptidase M17 family. It depends on Mn(2+) as a cofactor.

The protein resides in the cytoplasm. It catalyses the reaction Release of an N-terminal amino acid, Xaa-|-Yaa-, in which Xaa is preferably Leu, but may be other amino acids including Pro although not Arg or Lys, and Yaa may be Pro. Amino acid amides and methyl esters are also readily hydrolyzed, but rates on arylamides are exceedingly low.. The enzyme catalyses Release of an N-terminal amino acid, preferentially leucine, but not glutamic or aspartic acids.. Presumably involved in the processing and regular turnover of intracellular proteins. Catalyzes the removal of unsubstituted N-terminal amino acids from various peptides. This is Probable cytosol aminopeptidase from Rickettsia africae (strain ESF-5).